Here is a 293-residue protein sequence, read N- to C-terminus: Large ribosomal subunit protein uL18 (293 aa).

Residues 247 to 263 (IRANPAHEKKQPRDGLV) show a composition bias toward basic and acidic residues. Positions 247–283 (IRANPAHEKKQPRDGLVKKRWNRAKMSLKQKRDRVKQ) are disordered. Positions 264–283 (KKRWNRAKMSLKQKRDRVKQ) are enriched in basic residues.

The protein belongs to the universal ribosomal protein uL18 family. In terms of assembly, component of the large ribosomal subunit (LSU).

The protein resides in the cytoplasm. Its subcellular location is the nucleus. In terms of biological role, component of the ribosome, a large ribonucleoprotein complex responsible for the synthesis of proteins in the cell. The small ribosomal subunit (SSU) binds messenger RNAs (mRNAs) and translates the encoded message by selecting cognate aminoacyl-transfer RNA (tRNA) molecules. The large subunit (LSU) contains the ribosomal catalytic site termed the peptidyl transferase center (PTC), which catalyzes the formation of peptide bonds, thereby polymerizing the amino acids delivered by tRNAs into a polypeptide chain. The nascent polypeptides leave the ribosome through a tunnel in the LSU and interact with protein factors that function in enzymatic processing, targeting, and the membrane insertion of nascent chains at the exit of the ribosomal tunnel. This is Large ribosomal subunit protein uL18 (RPL5) from Suberites domuncula (Sponge).